The chain runs to 76 residues: Small ribosomal subunit protein uS17 (76 aa).

It belongs to the universal ribosomal protein uS17 family. Part of the 30S ribosomal subunit.

In terms of biological role, one of the primary rRNA binding proteins, it binds specifically to the 5'-end of 16S ribosomal RNA. The sequence is that of Small ribosomal subunit protein uS17 from Anaplasma phagocytophilum (strain HZ).